We begin with the raw amino-acid sequence, 440 residues long: Trigger factor (440 aa).

Residues 176–261 (GDKVVIDYQN…VKSIYVVKDV (86 aa)) enclose the PPIase FKBP-type domain.

It belongs to the FKBP-type PPIase family. Tig subfamily.

It localises to the cytoplasm. The catalysed reaction is [protein]-peptidylproline (omega=180) = [protein]-peptidylproline (omega=0). Functionally, involved in protein export. Acts as a chaperone by maintaining the newly synthesized protein in an open conformation. Functions as a peptidyl-prolyl cis-trans isomerase. The chain is Trigger factor from Ehrlichia canis (strain Jake).